The following is a 434-amino-acid chain: Serine protease HTRA2, mitochondrial (434 aa).

The interval Tyr-34–Asp-65 is disordered. The span at Ser-35–Asp-60 shows a compositional bias: low complexity. A helical transmembrane segment spans residues Leu-74–Met-92. The IAP-binding signature appears at Ala-85–Ser-88. Positions Ser-151–Leu-314 are serine protease. Residues His-169, Asp-201, and Ser-278 each act as charge relay system in the active site. The region spanning Met-337–Gln-424 is the PDZ domain.

Belongs to the peptidase S1C family. Interacts with th/DIAP1 (via BIR 2 domain).

It localises to the mitochondrion intermembrane space. The protein resides in the mitochondrion membrane. It carries out the reaction Cleavage of non-polar aliphatic amino-acids at the P1 position, with a preference for Val, Ile and Met. At the P2 and P3 positions, Arg is selected most strongly with a secondary preference for other hydrophilic residues.. Its function is as follows. Serine protease that shows proteolytic activity against a non-specific substrate beta-casein. Promotes or induces cell death either by direct binding to and inhibition of BIRC proteins (also called inhibitor of apoptosis proteins, IAPs), leading to an increase in caspase activity, or by a BIRC inhibition-independent, caspase-independent and serine protease activity-dependent mechanism. Can antagonize antiapoptotic activity of th/Diap1 by directly inducing the degradation of th/Diap1. This is Serine protease HTRA2, mitochondrial from Drosophila willistoni (Fruit fly).